Reading from the N-terminus, the 1648-residue chain is AT-rich interactive domain-containing protein arid-1 (1648 aa).

2 disordered regions span residues 150–270 and 284–307; these read ISEA…PVIN and RKLEKQAMKREKQRLKEEEREEKL. 3 stretches are compositionally biased toward acidic residues: residues 166–193, 219–228, and 251–260; these read DDDENDEEDQEDGENEEDADDDDDDTEE, TQSEESSADS, and SDEEDQEDLA. Residues 261–270 are compositionally biased toward polar residues; the sequence is TTDSENPVIN. One can recognise an ARID domain in the interval 655–745; the sequence is AETKDLFVAM…FLESYLAINT (91 aa). Disordered regions lie at residues 763–935, 1095–1563, and 1628–1648; these read VLPG…KEDT, SEKR…KPHD, and KTASSAAAAQASSSTCSTPRP. Residues 848–860 show a composition bias toward acidic residues; that stretch reads SDDVTDVPDDMTD. Composition is skewed to basic and acidic residues over residues 861–878 and 925–935; these read HEDLLPEAATRKKYERKS and SEGRGPRKEDT. Composition is skewed to acidic residues over residues 1102 to 1112 and 1145 to 1154; these read DDDESSDSDTD and GDEEAEEEVK. The span at 1165–1185 shows a compositional bias: low complexity; it reads QESPPTTSQGTTTPETAATGG. Residues 1195-1208 are compositionally biased toward pro residues; that stretch reads YPPVPEELVPPPPV. Residues 1213-1251 are compositionally biased toward polar residues; it reads FPSTDRFSSGGSSNYPTLSRQGSINSMASPMFSPNSDLS. The span at 1313–1326 shows a compositional bias: basic and acidic residues; it reads RASERSIDSASEHH. Polar residues predominate over residues 1348 to 1357; the sequence is ISTTQPTDTS. Residues 1377–1392 are compositionally biased toward low complexity; the sequence is ASPTLLTSGPLTLSSS. Over residues 1393–1404 the composition is skewed to pro residues; that stretch reads APPPPPASPAPP. 2 stretches are compositionally biased toward low complexity: residues 1474 to 1486 and 1531 to 1541; these read STTTTDTITPKSI and TPTTMTTSTPT. The span at 1542–1551 shows a compositional bias: polar residues; sequence RADSFQTQKN.

It is found in the nucleus. Functionally, DNA-binding protein which modulates activity of several transcription factors. Plays a role in the modulation of endoplasmic reticulum (ER) homeostasis during chemical and pathogen stress, including exposure to the Gram-negative bacterium P.aeruginosa. The polypeptide is AT-rich interactive domain-containing protein arid-1 (Caenorhabditis elegans).